The primary structure comprises 239 residues: tRNA (guanine-N(1)-)-methyltransferase (239 aa).

S-adenosyl-L-methionine-binding positions include Gly-110 and 130–135 (VGDYVL).

The protein belongs to the RNA methyltransferase TrmD family. In terms of assembly, homodimer.

It is found in the cytoplasm. The catalysed reaction is guanosine(37) in tRNA + S-adenosyl-L-methionine = N(1)-methylguanosine(37) in tRNA + S-adenosyl-L-homocysteine + H(+). In terms of biological role, specifically methylates guanosine-37 in various tRNAs. The sequence is that of tRNA (guanine-N(1)-)-methyltransferase from Borrelia turicatae (strain 91E135).